A 144-amino-acid polypeptide reads, in one-letter code: Large ribosomal subunit protein uL13 (144 aa).

It belongs to the universal ribosomal protein uL13 family. As to quaternary structure, part of the 50S ribosomal subunit.

In terms of biological role, this protein is one of the early assembly proteins of the 50S ribosomal subunit, although it is not seen to bind rRNA by itself. It is important during the early stages of 50S assembly. This chain is Large ribosomal subunit protein uL13, found in Pelotomaculum thermopropionicum (strain DSM 13744 / JCM 10971 / SI).